A 416-amino-acid chain; its full sequence is Kelch repeat-containing protein At1g19460 (416 aa).

The segment covering 1 to 11 has biased composition (polar residues); it reads MANISEISGDS. Residues 1 to 55 form a disordered region; it reads MANISEISGDSNDGGDPNKKPEEQVLRRSRRIATRNENQNKKPKEEEEKDNRSVS. Basic and acidic residues-rich tracts occupy residues 16–26 and 38–52; these read DPNKKPEEQVL and NQNKKPKEEEEKDNR. 4 Kelch repeats span residues 156–202, 203–250, 255–293, and 294–344; these read EMYV…VFDG, KIYV…FAHA, KLYILGSRCLIYEPKRNGEWDATVNANPIWNLWKVPCTM, and QCVI…SDGS.

In Arabidopsis thaliana (Mouse-ear cress), this protein is Kelch repeat-containing protein At1g19460.